The chain runs to 197 residues: MTFLIASNILLWIAFLGVTVVMLGLMRQVGLLHERSSPMGAMITDHGPDIGDMAPEFDLPDYFGRSVHIGGASERPTLLMFTAPTCPVCDKLFPIIKSIARAEKIGVVMISDGAPEEHARFLKNHELGQIRYVVSAEIGMAFQVGKIPYGVLVDGEGVIRAKGLTNTREHLESLLEADKTGFASLQQFMASRKKNAA.

A helical membrane pass occupies residues 3-23 (FLIASNILLWIAFLGVTVVML). One can recognise a Thioredoxin domain in the interval 48 to 180 (PDIGDMAPEF…LESLLEADKT (133 aa)).

Its subcellular location is the membrane. It participates in one-carbon metabolism; methylamine degradation. Its function is as follows. May be specifically involved in the processing, transport, and/or maturation of the MADH beta-subunit. The sequence is that of Methylamine utilization protein MauD (mauD) from Paracoccus versutus (Thiobacillus versutus).